Consider the following 73-residue polypeptide: Large ribosomal subunit protein uL24 (73 aa).

Over residues Asp51–Met65 the composition is skewed to basic and acidic residues. A disordered region spans residues Asp51 to Ala73.

The protein belongs to the universal ribosomal protein uL24 family. Part of the 50S ribosomal subunit.

One of two assembly initiator proteins, it binds directly to the 5'-end of the 23S rRNA, where it nucleates assembly of the 50S subunit. In terms of biological role, one of the proteins that surrounds the polypeptide exit tunnel on the outside of the subunit. The chain is Large ribosomal subunit protein uL24 from Helicobacter acinonychis (strain Sheeba).